The following is a 424-amino-acid chain: Serine--tRNA ligase (424 aa).

231–233 (TAE) contributes to the L-serine binding site. Residue 261-263 (RSE) participates in ATP binding. Position 284 (E284) interacts with L-serine. 348–351 (ETSS) is a binding site for ATP. L-serine is bound at residue S383.

The protein belongs to the class-II aminoacyl-tRNA synthetase family. Type-1 seryl-tRNA synthetase subfamily. Homodimer. The tRNA molecule binds across the dimer.

It localises to the cytoplasm. The enzyme catalyses tRNA(Ser) + L-serine + ATP = L-seryl-tRNA(Ser) + AMP + diphosphate + H(+). The catalysed reaction is tRNA(Sec) + L-serine + ATP = L-seryl-tRNA(Sec) + AMP + diphosphate + H(+). It participates in aminoacyl-tRNA biosynthesis; selenocysteinyl-tRNA(Sec) biosynthesis; L-seryl-tRNA(Sec) from L-serine and tRNA(Sec): step 1/1. Functionally, catalyzes the attachment of serine to tRNA(Ser). Is also able to aminoacylate tRNA(Sec) with serine, to form the misacylated tRNA L-seryl-tRNA(Sec), which will be further converted into selenocysteinyl-tRNA(Sec). In Metamycoplasma arthritidis (strain 158L3-1) (Mycoplasma arthritidis), this protein is Serine--tRNA ligase.